The primary structure comprises 432 residues: Amino acid transporter ANT1 (432 aa).

The segment at 1–30 is disordered; that stretch reads MAIKDLTATTGDSSLPLIKSPPSETTGGDR. Residues 1–35 are Cytoplasmic-facing; the sequence is MAIKDLTATTGDSSLPLIKSPPSETTGGDRTSALQ. Residues 36–56 form a helical membrane-spanning segment; it reads TLGNIIVSIVGTGVLGLPYAF. Residues 57–62 lie on the Lumenal side of the membrane; it reads RIAGWL. Residues 63-83 traverse the membrane as a helical segment; sequence AGSLGVIIVGFATYYCMLLLI. Residues 84 to 115 lie on the Cytoplasmic side of the membrane; that stretch reads QCRDKLESEEGEEESKTYGDLGFKCMGTKGRY. A helical transmembrane segment spans residues 116-136; the sequence is LTEFLIFTAQCGGSVAYLVFI. The Lumenal segment spans residues 137 to 147; the sequence is GRNLSSIFSSY. Residues 148-168 form a helical membrane-spanning segment; the sequence is GLSMVSFILILVPIEVGLSWI. Topologically, residues 169–172 are cytoplasmic; that stretch reads TSLS. The helical transmembrane segment at 173–193 threads the bilayer; sequence ALSPFSIFADICNIIAMCFVV. Residues 194 to 219 lie on the Lumenal side of the membrane; sequence KENVEMVIEGDFSFSDRTAISSTIGG. The helical transmembrane segment at 220–240 threads the bilayer; that stretch reads LPFAGGVAVFCFEGFAMTLAL. The Cytoplasmic portion of the chain corresponds to 241–256; that stretch reads ESSMREREAFPKLLAK. A helical membrane pass occupies residues 257 to 277; the sequence is VLAGITFVYVLFGFCGYMAYG. At 278–292 the chain is on the lumenal side; that stretch reads DQTKDIITLNLPNNW. A helical transmembrane segment spans residues 293–313; that stretch reads SAIAVQIGLCVGLTFTFPIMV. Over 314–353 the chain is Cytoplasmic; the sequence is HPLNEIIEQKLKRIDWLQKHHNGYSNETGSVSKFAIFTTR. Residues 354-374 form a helical membrane-spanning segment; the sequence is TLLVVGLAAIASLVPGFGTFA. Topologically, residues 375 to 379 are lumenal; the sequence is SLVGS. The helical transmembrane segment at 380-400 threads the bilayer; sequence TLCALISFVLPASYHLTLLGP. The Cytoplasmic segment spans residues 401 to 410; it reads SLNVWNKSID. A helical membrane pass occupies residues 411–431; sequence VFIVICGLIFAVYGTYNTIVG. Residue Val432 is a topological domain, lumenal.

It belongs to the amino acid/polyamine transporter 2 family. Amino acid/auxin permease (AAAP) (TC 2.A.18.8) subfamily. In terms of tissue distribution, ubiquitous. Highly expressed in flowers and cauline leaves and at lower levels in stems, leaves and roots.

The protein localises to the endoplasmic reticulum membrane. Its function is as follows. Translocates aromatic and neutral amino acids such as tyrosine, tryptophan, phenylalanine, histidine, proline, leucine, valine, glutamine, as well as arginine. Transports the auxins indole-3-acetic acid (IAA) and 2,4-dichlorophenoxyacetic acid (2,4-D). The chain is Amino acid transporter ANT1 from Arabidopsis thaliana (Mouse-ear cress).